A 485-amino-acid chain; its full sequence is Protein adenylyltransferase Fic (485 aa).

A helical membrane pass occupies residues 21-43 (YRFVLFFIAGSLAAFAFHALTSS). 2 TPR repeats span residues 107-140 (AMGALRLAQEMYMAGKDDKAARLFEHALALAPKH) and 141-175 (PEVLLRYGEFLEHNQRNIVLADQYYFQALCISPSN). The Inhibitory (S/T)XXXE(G/N) motif signature appears at 232 to 237 (SVGIEG). ATP contacts are provided by residues E236 and 317–320 (VGGH). One can recognise a Fido domain in the interval 286-421 (ITLKDILELH…IRPFVRFIAD (136 aa)). H364 is a catalytic residue. Residues 368 to 375 (DGNGRTSR), 400 to 401 (YY), and N408 contribute to the ATP site.

The protein belongs to the fic family. Homodimer.

Its subcellular location is the membrane. It catalyses the reaction L-tyrosyl-[protein] + ATP = O-(5'-adenylyl)-L-tyrosyl-[protein] + diphosphate. It carries out the reaction L-threonyl-[protein] + ATP = 3-O-(5'-adenylyl)-L-threonyl-[protein] + diphosphate. The catalysed reaction is 3-O-(5'-adenylyl)-L-threonyl-[protein] + H2O = L-threonyl-[protein] + AMP + H(+). With respect to regulation, the side chain of Glu-236 determines which of the two opposing activities (AMPylase or de-AMPylase) will take place. In response to endoplasmic reticulum stress, mediates de-AMPylase activity. Adenylyltransferase activity is inhibited by the inhibitory helix present at the N-terminus: Glu-236 binds ATP and competes with ATP-binding at Arg-375, thereby preventing adenylyltransferase activity. In unstressed cells, disengagement of Glu-236 promotes adenylyltransferase activity. Activation dissociates ATP-binding from Glu-236, allowing ordered binding of the entire ATP moiety with the alpha-phosphate in an orientation that is productive for accepting an incoming target hydroxyl side chain. Functionally, protein that can both mediate the addition of adenosine 5'-monophosphate (AMP) to specific residues of target proteins (AMPylation), and the removal of the same modification from target proteins (de-AMPylation), depending on the context. The side chain of Glu-236 determines which of the two opposing activities (AMPylase or de-AMPylase) will take place. Acts as a key regulator of the unfolded protein response (UPR) by mediating AMPylation or de-AMPylation of Hsc70-3/BiP. In unstressed cells, acts as an adenylyltransferase by mediating AMPylation of Hsc70-3/BiP at 'Thr-518', thereby inactivating it. In response to endoplasmic reticulum stress, acts as a phosphodiesterase by mediating removal of ATP (de-AMPylation) from Hsc70-3/BiP at 'Thr-518', leading to restore HSPA5/BiP activity. The chain is Protein adenylyltransferase Fic from Drosophila virilis (Fruit fly).